Consider the following 505-residue polypeptide: Mannosyl-oligosaccharide alpha-1,2-mannosidase 1B (505 aa).

An N-terminal signal peptide occupies residues 1–16 (MRTLLALAALAGFAAA). N88 and N174 each carry an N-linked (GlcNAc...) asparagine glycan. An intrachain disulfide couples C325 to C354. Residue N359 is glycosylated (N-linked (GlcNAc...) asparagine). The active-site Proton donor is the E368. T494 is a binding site for Ca(2+).

This sequence belongs to the glycosyl hydrolase 47 family. In terms of assembly, monomer. Requires Ca(2+) as cofactor. Mg(2+) is required as a cofactor.

Its subcellular location is the cytoplasmic vesicle lumen. It catalyses the reaction N(4)-(alpha-D-Man-(1-&gt;2)-alpha-D-Man-(1-&gt;2)-alpha-D-Man-(1-&gt;3)-[alpha-D-Man-(1-&gt;2)-alpha-D-Man-(1-&gt;3)-[alpha-D-Man-(1-&gt;2)-alpha-D-Man-(1-&gt;6)]-alpha-D-Man-(1-&gt;6)]-beta-D-Man-(1-&gt;4)-beta-D-GlcNAc-(1-&gt;4)-beta-D-GlcNAc)-L-asparaginyl-[protein] (N-glucan mannose isomer 9A1,2,3B1,2,3) + 4 H2O = N(4)-(alpha-D-Man-(1-&gt;3)-[alpha-D-Man-(1-&gt;3)-[alpha-D-Man-(1-&gt;6)]-alpha-D-Man-(1-&gt;6)]-beta-D-Man-(1-&gt;4)-beta-D-GlcNAc-(1-&gt;4)-beta-D-GlcNAc)-L-asparaginyl-[protein] (N-glucan mannose isomer 5A1,2) + 4 beta-D-mannose. The catalysed reaction is N(4)-(alpha-D-Man-(1-&gt;2)-alpha-D-Man-(1-&gt;2)-alpha-D-Man-(1-&gt;3)-[alpha-D-Man-(1-&gt;3)-[alpha-D-Man-(1-&gt;2)-alpha-D-Man-(1-&gt;6)]-alpha-D-Man-(1-&gt;6)]-beta-D-Man-(1-&gt;4)-beta-D-GlcNAc-(1-&gt;4)-beta-D-GlcNAc)-L-asparaginyl-[protein] (N-glucan mannose isomer 8A1,2,3B1,3) + 3 H2O = N(4)-(alpha-D-Man-(1-&gt;3)-[alpha-D-Man-(1-&gt;3)-[alpha-D-Man-(1-&gt;6)]-alpha-D-Man-(1-&gt;6)]-beta-D-Man-(1-&gt;4)-beta-D-GlcNAc-(1-&gt;4)-beta-D-GlcNAc)-L-asparaginyl-[protein] (N-glucan mannose isomer 5A1,2) + 3 beta-D-mannose. Its pathway is protein modification; protein glycosylation. In terms of biological role, involved in the maturation of Asn-linked oligosaccharides. Progressively trims alpha-1,2-linked mannose residues from Man(9)GlcNAc(2) to produce Man(5)GlcNAc(2). This is Mannosyl-oligosaccharide alpha-1,2-mannosidase 1B (mns1B) from Emericella nidulans (strain FGSC A4 / ATCC 38163 / CBS 112.46 / NRRL 194 / M139) (Aspergillus nidulans).